Here is a 479-residue protein sequence, read N- to C-terminus: Transcription factor CP2-like protein 1 (479 aa).

Positions 43–280 (RLPPLQYVLC…PSPSYNGSPN (238 aa)) constitute a Grh/CP2 DB domain. 2 disordered regions span residues 219-245 (KPKG…KEKY) and 271-301 (PSPS…LPVG). Basic and acidic residues predominate over residues 221-245 (KGADRKQKTDREKMEKRTAQEKEKY). The SAM2-like domain stretch occupies residues 261-365 (PDVAYQVNSA…IRLFNAIKGR (105 aa)). The segment covering 271 to 281 (PSPSYNGSPNS) has biased composition (polar residues).

This sequence belongs to the grh/CP2 family. CP2 subfamily. Forms homohexamers via its SAM-like domain. Interacts with MTA1; which is indispensable for TFCP2l1-mediated self-renewal-promoting effect and endoderm-inhibiting action. Highly expressed in placental JEG-3 cells and very low levels of expression in non-steroidogenic cells. No expression was seen in adrenal NCI-H295A cells or in adrenal tissue.

It localises to the nucleus. Its function is as follows. Transcription factor that facilitates establishment and maintenance of pluripotency in embryonic stem cells (ESCs). With KLF2, acts as the major effector of self-renewal that mediates induction of pluripotency downstream of LIF/STAT3 and Wnt/beta-catenin signaling. Required for normal duct development in the salivary gland and kidney. Coordinates the development of the kidney collecting ducts intercalated (IC) and principal (PC) cells, which regulate acid-base and salt-water homeostasis, respectively. Regulates the expression of IC genes including subunits B1 and D2 of the V-ATPase complex, OXGR1, CA12, SLC4A1, AQP6 and IC-specific transcription factor FOXI1. Also regulates the expression of JAG1 and subsequent notch signaling in the collecting duct. JAG1 initiates notch signaling in PCs but inhibits notch signaling in ICs. Acts as a transcriptional suppressor that may suppress UBP1-mediated transcriptional activation. Modulates the placental expression of CYP11A1. This Homo sapiens (Human) protein is Transcription factor CP2-like protein 1 (TFCP2L1).